An 873-amino-acid chain; its full sequence is Alanine--tRNA ligase (873 aa).

Zn(2+) contacts are provided by His-557, His-561, Cys-659, and His-663.

Belongs to the class-II aminoacyl-tRNA synthetase family. Zn(2+) is required as a cofactor.

Its subcellular location is the cytoplasm. It catalyses the reaction tRNA(Ala) + L-alanine + ATP = L-alanyl-tRNA(Ala) + AMP + diphosphate. Its function is as follows. Catalyzes the attachment of alanine to tRNA(Ala) in a two-step reaction: alanine is first activated by ATP to form Ala-AMP and then transferred to the acceptor end of tRNA(Ala). Also edits incorrectly charged Ser-tRNA(Ala) and Gly-tRNA(Ala) via its editing domain. The chain is Alanine--tRNA ligase from Nitrosococcus oceani (strain ATCC 19707 / BCRC 17464 / JCM 30415 / NCIMB 11848 / C-107).